A 91-amino-acid polypeptide reads, in one-letter code: Probable Fe(2+)-trafficking protein (91 aa).

This sequence belongs to the Fe(2+)-trafficking protein family.

In terms of biological role, could be a mediator in iron transactions between iron acquisition and iron-requiring processes, such as synthesis and/or repair of Fe-S clusters in biosynthetic enzymes. This is Probable Fe(2+)-trafficking protein from Mannheimia succiniciproducens (strain KCTC 0769BP / MBEL55E).